Reading from the N-terminus, the 198-residue chain is Ribonuclease HII 1 (198 aa).

Positions Glu7–Ala196 constitute an RNase H type-2 domain. Residues Asp13, Glu14, and Asp105 each coordinate a divalent metal cation.

It belongs to the RNase HII family. It depends on Mn(2+) as a cofactor. Mg(2+) is required as a cofactor.

It localises to the cytoplasm. The catalysed reaction is Endonucleolytic cleavage to 5'-phosphomonoester.. Endonuclease that specifically degrades the RNA of RNA-DNA hybrids. The chain is Ribonuclease HII 1 from Methylibium petroleiphilum (strain ATCC BAA-1232 / LMG 22953 / PM1).